The chain runs to 692 residues: 5-taurinomethyluridine-[tRNA] synthase subunit MTO1, mitochondrial (692 aa).

The transit peptide at 1 to 25 directs the protein to the mitochondrion; the sequence is MFYFRGCGRWVAASFTKLQFPLARL. Residues 43-48, Val-155, Ser-218, and Gln-407 each bind FAD; that span reads GGGHAG. The residue at position 508 (Lys-508) is an N6-methyllysine.

Belongs to the MnmG family. As to quaternary structure, homodimer; forms a dimer in the presence of potassium. Interacts with GTPBP3; forms the GTPBP3-MTO1 complex composed of homodimers of GTPBP3 and MTO1. FAD is required as a cofactor.

It is found in the mitochondrion. It carries out the reaction 5,10-methylenetetrahydrofolate + uridine(34) in tRNA + taurine + GTP + A + H2O = 5-taurinomethyluridine(34) in tRNA + 7,8-dihydrofolate + GDP + AH2 + phosphate + H(+). Its function is as follows. Component of the GTPBP3-MTO1 complex that catalyzes the 5-taurinomethyluridine (taum(5)U) modification at the 34th wobble position (U34) of mitochondrial tRNAs (mt-tRNAs), which plays a role in mt-tRNA decoding and mitochondrial translation. Taum(5)U formation on mammalian mt-tRNA requires the presence of both GTPBP3-mediated GTPase activity and MTO1 catalytic activity. This chain is 5-taurinomethyluridine-[tRNA] synthase subunit MTO1, mitochondrial (MTO1), found in Pongo abelii (Sumatran orangutan).